Consider the following 170-residue polypeptide: MSLPNPAELLPRMASDLRAHLAERGIERPRYVGIHTGGIWVAEALLKALGNEEPLGTLDVSFYRDDFTRNGLHPQVRPSALPFEIDGQHLVLVDDVLMSGRTIRAALNELFDYGRPASVTLVCLLDLNARELPIRPDVVGQTLSLGRDERVKLVGPAPLALERKVLSPAS.

The short motif at 90 to 102 (LVLVDDVLMSGRT) is the PRPP-binding element.

Belongs to the purine/pyrimidine phosphoribosyltransferase family. PyrR subfamily.

The enzyme catalyses UMP + diphosphate = 5-phospho-alpha-D-ribose 1-diphosphate + uracil. In terms of biological role, regulates the transcription of the pyrimidine nucleotide (pyr) operon in response to exogenous pyrimidines. Also displays a weak uracil phosphoribosyltransferase activity which is not physiologically significant. This chain is Bifunctional protein PyrR, found in Pseudomonas paraeruginosa (strain DSM 24068 / PA7) (Pseudomonas aeruginosa (strain PA7)).